The chain runs to 220 residues: Flagellin A2 (220 aa).

The propeptide occupies 1 to 11; sequence MFNNITDDDRG. Asparagine 78, asparagine 95, asparagine 112, and asparagine 124 each carry an N-linked (GlcNAc...) asparagine glycan.

The protein belongs to the archaeal flagellin family. In terms of processing, glycosylated by a pentasaccharide similar to the S-layer glycoprotein, probably comprising a hexose, 2 hexuronic acids, a methyl ester of a hexuronic acid and mannose.

The protein localises to the archaeal flagellum. Flagellin that plays both structural and regulatory roles in flagella biosynthesis. Does not constitute a major flagellin in terms of abundance contrary to FlgA1: may regulate the flagella-dependent swimming motility depending on the relative abundance of FlgA1. Not involved in PibD-dependent surface adhesion. The sequence is that of Flagellin A2 (flgA2) from Haloferax volcanii (strain ATCC 29605 / DSM 3757 / JCM 8879 / NBRC 14742 / NCIMB 2012 / VKM B-1768 / DS2) (Halobacterium volcanii).